Reading from the N-terminus, the 466-residue chain is FVGFKAGVKDYKLTYYTPDYETKDTDILAAFRVTPQPGVPPEEAGAAVAAESSTGTWTTVWTDGLTSLDRYKGRCYGIEPVAGEENQFIAYVAYPLDLFEEGSVTNMFTSIVGNVFGFKALRALRLEDLRIPPAYSKTFQGPPHGIQVERDKLNKYGRPLLGCTIKPKLGLSAKNYGRAVYECLRGGLDFTKDDENVNSQPFMRWRDRFLFCAEAIYKSQAETGEIKGHYLNATAGTCEEMIKRAVFARELGVPIVMHDYLTGGFTANTSLAHYCRDNGLLLHIHRAMHAVIDRQKNHGMHFRVLAKALRMSGGDHIHAGTVVGKLEGEREITLGFVDLLRDDFIEKDRSRGIYFTQDWVSMPGVLPVASGGIHVWHMPALTEIFGDDSVLQFGGGTLGHPWGNAPGAVANRVALEACVQARNEGRDLAREGNEIIREAAKWSPELAAACEVWKEIKFEFEAMDTL.

Lysine 5 carries the N6,N6,N6-trimethyllysine modification. Substrate contacts are provided by asparagine 114 and threonine 164. Catalysis depends on lysine 166, which acts as the Proton acceptor. Position 168 (lysine 168) interacts with substrate. Mg(2+) contacts are provided by lysine 192, aspartate 194, and glutamate 195. Lysine 192 is modified (N6-carboxylysine). The Proton acceptor role is filled by histidine 285. Residues arginine 286, histidine 318, and serine 370 each contribute to the substrate site.

Belongs to the RuBisCO large chain family. Type I subfamily. In terms of assembly, heterohexadecamer of 8 large chains and 8 small chains; disulfide-linked. The disulfide link is formed within the large subunit homodimers. It depends on Mg(2+) as a cofactor. Post-translationally, the disulfide bond which can form in the large chain dimeric partners within the hexadecamer appears to be associated with oxidative stress and protein turnover.

Its subcellular location is the plastid. It localises to the chloroplast. It catalyses the reaction 2 (2R)-3-phosphoglycerate + 2 H(+) = D-ribulose 1,5-bisphosphate + CO2 + H2O. The enzyme catalyses D-ribulose 1,5-bisphosphate + O2 = 2-phosphoglycolate + (2R)-3-phosphoglycerate + 2 H(+). In terms of biological role, ruBisCO catalyzes two reactions: the carboxylation of D-ribulose 1,5-bisphosphate, the primary event in carbon dioxide fixation, as well as the oxidative fragmentation of the pentose substrate in the photorespiration process. Both reactions occur simultaneously and in competition at the same active site. In Saururus cernuus (Lizard's tail), this protein is Ribulose bisphosphate carboxylase large chain.